Here is an 83-residue protein sequence, read N- to C-terminus: Putative defensin-like protein 150 (83 aa).

Residues 1 to 25 (MMGKHIQLSFAILIMFTIFVLGAVG) form the signal peptide. 4 disulfide bridges follow: C35/C83, C44/C64, C49/C77, and C53/C79.

The protein belongs to the DEFL family.

The protein resides in the secreted. The polypeptide is Putative defensin-like protein 150 (LCR32) (Arabidopsis thaliana (Mouse-ear cress)).